The primary structure comprises 278 residues: tRNA (guanine-N(7)-)-methyltransferase (278 aa).

The interval 1-42 (MRHDGPMHVQPGVGLQSDTSSSTGTGSGPADEPEAEKSAWGY) is disordered. S-adenosyl-L-methionine-binding residues include Glu-106, Glu-131, Asn-160, and Asp-183. Residue Asp-183 is part of the active site. Residues Lys-187, Asp-219, and 256–259 (TKYE) contribute to the substrate site.

This sequence belongs to the class I-like SAM-binding methyltransferase superfamily. TrmB family.

It carries out the reaction guanosine(46) in tRNA + S-adenosyl-L-methionine = N(7)-methylguanosine(46) in tRNA + S-adenosyl-L-homocysteine. It participates in tRNA modification; N(7)-methylguanine-tRNA biosynthesis. Functionally, catalyzes the formation of N(7)-methylguanine at position 46 (m7G46) in tRNA. The polypeptide is tRNA (guanine-N(7)-)-methyltransferase (Mycobacterium ulcerans (strain Agy99)).